The chain runs to 81 residues: Photosystem I iron-sulfur center (81 aa).

2 consecutive 4Fe-4S ferredoxin-type domains span residues serine 2 to tryptophan 31 and isoleucine 39 to tyrosine 68. [4Fe-4S] cluster is bound by residues cysteine 11, cysteine 14, cysteine 17, cysteine 21, cysteine 48, cysteine 51, cysteine 54, and cysteine 58.

In terms of assembly, the cyanobacterial PSI reaction center is composed of one copy each of PsaA,B,C,D,E,F,I,J,K,L,M and X, and forms trimeric complexes. [4Fe-4S] cluster serves as cofactor.

It localises to the cellular thylakoid membrane. The enzyme catalyses reduced [plastocyanin] + hnu + oxidized [2Fe-2S]-[ferredoxin] = oxidized [plastocyanin] + reduced [2Fe-2S]-[ferredoxin]. In terms of biological role, apoprotein for the two 4Fe-4S centers FA and FB of photosystem I (PSI); essential for photochemical activity. FB is the terminal electron acceptor of PSI, donating electrons to ferredoxin. The C-terminus interacts with PsaA/B/D and helps assemble the protein into the PSI complex. Required for binding of PsaD and PsaE to PSI. PSI is a plastocyanin/cytochrome c6-ferredoxin oxidoreductase, converting photonic excitation into a charge separation, which transfers an electron from the donor P700 chlorophyll pair to the spectroscopically characterized acceptors A0, A1, FX, FA and FB in turn. The sequence is that of Photosystem I iron-sulfur center from Prochlorococcus marinus (strain MIT 9313).